A 533-amino-acid polypeptide reads, in one-letter code: Lysine--tRNA ligase (533 aa).

The short motif at 28 to 36 is the 'HIGH' region element; sequence PSGHIHIGN. Residues 278–282 carry the 'KMSKS' region motif; sequence PMSSS.

This sequence belongs to the class-I aminoacyl-tRNA synthetase family.

The protein resides in the cytoplasm. The enzyme catalyses tRNA(Lys) + L-lysine + ATP = L-lysyl-tRNA(Lys) + AMP + diphosphate. The protein is Lysine--tRNA ligase (lysS) of Methanococcus maripaludis (strain DSM 14266 / JCM 13030 / NBRC 101832 / S2 / LL).